We begin with the raw amino-acid sequence, 315 residues long: PIH1 domain-containing protein 2 (315 aa).

It belongs to the PIH1 family.

The polypeptide is PIH1 domain-containing protein 2 (PIH1D2) (Homo sapiens (Human)).